Here is a 965-residue protein sequence, read N- to C-terminus: Collagenase ColQ1 (965 aa).

The signal sequence occupies residues M1–A30. Residues E31–S93 constitute a propeptide that is removed on maturation. The activator domain stretch occupies residues Y94–N366. Residues Y94–G765 form an S1 metalloprotease domain region. The interval D376 to K645 is catalytic subdomain. H501 is a binding site for Zn(2+). The active site involves E502. Zn(2+) contacts are provided by H505 and E533. The interval D653–G765 is helper subdomain. The PKD domain maps to A769–V850. Positions S842 to A867 are disordered. The span at E845–E859 shows a compositional bias: polar residues. Residues G853 to K965 form a collagen-binding domain region.

The protein belongs to the peptidase M9B family. Collagenase subfamily. The cofactor is Ca(2+). Requires Zn(2+) as cofactor.

It localises to the secreted. The enzyme catalyses Digestion of native collagen in the triple helical region at Xaa-|-Gly bonds. With synthetic peptides, a preference is shown for Gly at P3 and P1', Pro and Ala at P2 and P2', and hydroxyproline, Ala or Arg at P3'.. With respect to regulation, strongly inhibited by EDTA. Not inhibited by E-64 and PMSF, broad-spectrum cysteine and serine protease inhibitors. Its function is as follows. Acts as a true collagenase, which is highly active and cleaves natively folded collagen. In vitro, can also cleave gelatin and the synthetic peptide FALGPA (furylacryloyl-Leu-Gly-Pro-Ala). Causes damage on dermal collagen (COL), resulting in gaps in the tissue, which might lead to an accelerated bacterial infiltration and penetration into deeper sites of the host. This chain is Collagenase ColQ1, found in Bacillus cereus (strain Q1).